Reading from the N-terminus, the 891-residue chain is Alanine--tRNA ligase (891 aa).

Zn(2+)-binding residues include His-564, His-568, Cys-681, and His-685.

This sequence belongs to the class-II aminoacyl-tRNA synthetase family. Zn(2+) is required as a cofactor.

The protein resides in the cytoplasm. It catalyses the reaction tRNA(Ala) + L-alanine + ATP = L-alanyl-tRNA(Ala) + AMP + diphosphate. In terms of biological role, catalyzes the attachment of alanine to tRNA(Ala) in a two-step reaction: alanine is first activated by ATP to form Ala-AMP and then transferred to the acceptor end of tRNA(Ala). Also edits incorrectly charged Ser-tRNA(Ala) and Gly-tRNA(Ala) via its editing domain. The protein is Alanine--tRNA ligase of Methylorubrum populi (strain ATCC BAA-705 / NCIMB 13946 / BJ001) (Methylobacterium populi).